The sequence spans 331 residues: Ribosomal RNA small subunit methyltransferase H (331 aa).

Residues 48 to 50, aspartate 67, aspartate 115, and glutamine 122 contribute to the S-adenosyl-L-methionine site; that span reads GGH. Residues 297 to 331 are disordered; sequence RGTEKPTEEEISENRRASSAKVRAVEKIRTSRTTA. A compositionally biased stretch (basic and acidic residues) spans 298 to 312; it reads GTEKPTEEEISENRR.

Belongs to the methyltransferase superfamily. RsmH family.

Its subcellular location is the cytoplasm. It catalyses the reaction cytidine(1402) in 16S rRNA + S-adenosyl-L-methionine = N(4)-methylcytidine(1402) in 16S rRNA + S-adenosyl-L-homocysteine + H(+). Its function is as follows. Specifically methylates the N4 position of cytidine in position 1402 (C1402) of 16S rRNA. The protein is Ribosomal RNA small subunit methyltransferase H of Micrococcus luteus (strain ATCC 4698 / DSM 20030 / JCM 1464 / CCM 169 / CCUG 5858 / IAM 1056 / NBRC 3333 / NCIMB 9278 / NCTC 2665 / VKM Ac-2230) (Micrococcus lysodeikticus).